The following is a 589-amino-acid chain: Delta-like protein 3 (589 aa).

The signal sequence occupies residues 1–32 (MVSLQVSSLPQTLILAFLLPQALPAGVFELQI). Residues 33-494 (HSFGPGPGPG…LRQADSQRFL (462 aa)) lie on the Extracellular side of the membrane. The 40-residue stretch at 174–213 (ARCEPPAVGAACARLCRSRSAPSRCGPGLRPCTPFPDECE) folds into the DSL domain. EGF-like domains follow at residues 218 to 251 (SLTVCRAGCSPEHGYCEEPDECHCLEGWTGPLCT), 276 to 312 (GPGPCDGNPCANGGSCSETPGSFECACPRGFYGPRCE), 314 to 353 (SGVTCADGPCFNGGLCVGGEDPDSAYVCHCPPAFQGSNCE), 355 to 391 (RVDRCSLQPCQNGGLCLDLGHALRCRCRAGFAGPRCE), 393 to 429 (DLDDCAGRACANGGTCVEGGGARRCSCALGFGGRDCR), and 431 to 467 (RADPCASRPCAHGGRCYAHFSGLVCACAPGYMGVRCE). Disulfide bonds link cysteine 222–cysteine 233, cysteine 226–cysteine 239, cysteine 241–cysteine 250, cysteine 280–cysteine 291, cysteine 285–cysteine 300, cysteine 302–cysteine 311, cysteine 318–cysteine 329, cysteine 323–cysteine 341, cysteine 343–cysteine 352, cysteine 359–cysteine 370, cysteine 364–cysteine 379, cysteine 381–cysteine 390, cysteine 397–cysteine 408, cysteine 402–cysteine 417, cysteine 419–cysteine 428, cysteine 435–cysteine 446, cysteine 440–cysteine 455, and cysteine 457–cysteine 466. Residues 495 to 515 (LPPALGLLAAAALAGAALLLI) form a helical membrane-spanning segment. The Cytoplasmic segment spans residues 516-589 (HVRRRGPGRD…PAPSIYAREA (74 aa)). The tract at residues 552-574 (QDGAGDGPTSSADWNHPEDGDSR) is disordered.

As to quaternary structure, can bind and activate Notch-1 or another Notch receptor. In terms of processing, ubiquitinated by MIB (MIB1 or MIB2), leading to its endocytosis and subsequent degradation.

The protein resides in the membrane. Its function is as follows. Inhibits primary neurogenesis. May be required to divert neurons along a specific differentiation pathway. Plays a role in the formation of somite boundaries during segmentation of the paraxial mesoderm. The polypeptide is Delta-like protein 3 (Dll3) (Rattus norvegicus (Rat)).